Here is a 561-residue protein sequence, read N- to C-terminus: PR domain zinc finger protein 14 (561 aa).

Positions 1–20 (MALPPSGETQSQDKANYLPQ) are disordered. Polar residues predominate over residues 7–20 (GETQSQDKANYLPQ). The interaction with CBFA2T2 stretch occupies residues 184-373 (GFNFTEEELS…GVPMNLRVTE (190 aa)). One can recognise an SET domain in the interval 241–356 (EGLCLMQTSF…RNQELLVWYG (116 aa)). Tyr-355 contacts S-adenosyl-L-methionine. The C2H2-type 1; atypical zinc-finger motif lies at 390-416 (YRCERCGKVFTYKYYRDKHLKYTPCVD). 5 consecutive C2H2-type zinc fingers follow at residues 422–445 (FPCSLCQRSFEKRDRLRIHILHVH), 451–473 (YLCSTCGKSFSQSSSLNKHMRVH), 479–501 (YQCVYCTKKFTASSILRTHIRQH), 507–530 (FKCKHCGKAFASHAAHDSHVRRSH), and 536–558 (SSCDICGKGFLDQEAFYAHMRLH).

Belongs to the class V-like SAM-binding methyltransferase superfamily. As to quaternary structure, interacts with CBFA2T2. Restricted to embryonic stem cells and primordial germ cells. Not detected in epiblast-derived stem cells.

The protein resides in the nucleus. Its function is as follows. Transcription factor that has both positive and negative roles on transcription. Plays a role in cellular pluripotency. Essential for germ cell development at 2 levels: the reacquisition of potential pluripotency, including SOX2 up-regulation, and successful epigenetic reprogramming, characterized by EHMT1 repression. Its association with CBFA2T2 is required for the functions in pluripotency and germ cell formation. The sequence is that of PR domain zinc finger protein 14 (Prdm14) from Mus musculus (Mouse).